We begin with the raw amino-acid sequence, 334 residues long: Holliday junction branch migration complex subunit RuvB (334 aa).

Residues 1–182 (MDKRMVDQEF…FGVHLRLEYY (182 aa)) form a large ATPase domain (RuvB-L) region. ATP is bound by residues L21, R22, G63, K66, T67, T68, 129-131 (EDF), R172, Y182, and R219. Mg(2+) is bound at residue T67. Residues 183-253 (NENDLKEIIT…TTKRALQLLQ (71 aa)) are small ATPAse domain (RuvB-S). Residues 256–334 (QHGLDYIDHK…HFNTTNEKRE (79 aa)) form a head domain (RuvB-H) region. Residues R292, R311, and R316 each contribute to the DNA site.

Belongs to the RuvB family. In terms of assembly, homohexamer. Forms an RuvA(8)-RuvB(12)-Holliday junction (HJ) complex. HJ DNA is sandwiched between 2 RuvA tetramers; dsDNA enters through RuvA and exits via RuvB. An RuvB hexamer assembles on each DNA strand where it exits the tetramer. Each RuvB hexamer is contacted by two RuvA subunits (via domain III) on 2 adjacent RuvB subunits; this complex drives branch migration. In the full resolvosome a probable DNA-RuvA(4)-RuvB(12)-RuvC(2) complex forms which resolves the HJ.

The protein localises to the cytoplasm. It carries out the reaction ATP + H2O = ADP + phosphate + H(+). Functionally, the RuvA-RuvB-RuvC complex processes Holliday junction (HJ) DNA during genetic recombination and DNA repair, while the RuvA-RuvB complex plays an important role in the rescue of blocked DNA replication forks via replication fork reversal (RFR). RuvA specifically binds to HJ cruciform DNA, conferring on it an open structure. The RuvB hexamer acts as an ATP-dependent pump, pulling dsDNA into and through the RuvAB complex. RuvB forms 2 homohexamers on either side of HJ DNA bound by 1 or 2 RuvA tetramers; 4 subunits per hexamer contact DNA at a time. Coordinated motions by a converter formed by DNA-disengaged RuvB subunits stimulates ATP hydrolysis and nucleotide exchange. Immobilization of the converter enables RuvB to convert the ATP-contained energy into a lever motion, pulling 2 nucleotides of DNA out of the RuvA tetramer per ATP hydrolyzed, thus driving DNA branch migration. The RuvB motors rotate together with the DNA substrate, which together with the progressing nucleotide cycle form the mechanistic basis for DNA recombination by continuous HJ branch migration. Branch migration allows RuvC to scan DNA until it finds its consensus sequence, where it cleaves and resolves cruciform DNA. This chain is Holliday junction branch migration complex subunit RuvB, found in Staphylococcus epidermidis (strain ATCC 35984 / DSM 28319 / BCRC 17069 / CCUG 31568 / BM 3577 / RP62A).